Reading from the N-terminus, the 126-residue chain is Large ribosomal subunit protein eL14 (126 aa).

It belongs to the eukaryotic ribosomal protein eL14 family.

The polypeptide is Large ribosomal subunit protein eL14 (RPL14) (Tetrahymena thermophila (strain SB210)).